The following is a 621-amino-acid chain: Leucine aminopeptidase (621 aa).

Positions Met1 to Met73 are excised as a propeptide. The interval Ser129 to Gln152 is disordered. Positions Gly132–Gly150 are enriched in gly residues. Positions 390, 395, and 402 each coordinate a peptide. Zn(2+) is bound by residues Lys390 and Asp395. The tract at residues Asn400–Ser417 is L13 loop. Lys402 is a catalytic residue. Positions 410, 412, 415, 475, and 477 each coordinate Zn(2+). 2 residues coordinate a peptide: Asp415 and Asp475. Arg479 is an active-site residue.

This sequence belongs to the peptidase M17 family. Homohexamer composed of dimer of trimers. Both the identity and concentration of metal ions available dictate the extent to which oligomerization occurs; Mn(2+) and Co(2+) induces oligomerization, whereas Mg(2+) has no effect, and Zn(2+) causes irreversible protein aggregation in vitro. It depends on Zn(2+) as a cofactor.

It is found in the cytoplasm. The catalysed reaction is Release of an N-terminal amino acid, Xaa-|-Yaa-, in which Xaa is preferably Leu, but may be other amino acids including Pro although not Arg or Lys, and Yaa may be Pro. Amino acid amides and methyl esters are also readily hydrolyzed, but rates on arylamides are exceedingly low.. It carries out the reaction L-cysteinylglycine + H2O = L-cysteine + glycine. With respect to regulation, oligomerization is required for catalytic activity and is metal-dependent. The type of metal that binds the 2 metal binding sites influences catalytic activity and substrate specificity. In vitro, activated by Co(2+), Mn(2+), Ni(2+), Mg(2+) and Zn(2+) with decreasing strength. Occupancy of the site 2 is essential and sufficient for activating the enzyme but occupation of the 2 sites is necessary for full catalytic activity. Inhibited by Ca(2+). Inhibited by fungal metabolite bestatin. Its function is as follows. Aminopeptidase which preferentially cleaves leucine residues from the N-terminus of peptides. Also, has some activity towards tryptophan and methionine and has very low activity towards alanine, arginine, asparagine, phenylalanine and tyrosine. No activity towards histidine, serine, valine, isoleucine, glycine, aspartic acid and glutamic acid. In addition, cleaves the Cys-Gly dipeptide, probably as part of the glutathione regulation pathway; cleavage only occurs in the presence of Mn(2+). Plays a role in the final step of host hemoglobin catabolism, by cleaving hemoglobin-derived oligopeptides providing a source of amino acids for the parasite protein synthesis and for the maintenance of osmotic homeostasis. The sequence is that of Leucine aminopeptidase from Plasmodium vivax (strain Salvador I).